We begin with the raw amino-acid sequence, 361 residues long: Uroporphyrinogen decarboxylase (361 aa).

Substrate-binding positions include R44–R48, D93, Y168, S223, and H337.

Belongs to the uroporphyrinogen decarboxylase family. Homodimer.

The protein localises to the cytoplasm. It catalyses the reaction uroporphyrinogen III + 4 H(+) = coproporphyrinogen III + 4 CO2. It participates in porphyrin-containing compound metabolism; protoporphyrin-IX biosynthesis; coproporphyrinogen-III from 5-aminolevulinate: step 4/4. Catalyzes the decarboxylation of four acetate groups of uroporphyrinogen-III to yield coproporphyrinogen-III. This is Uroporphyrinogen decarboxylase from Thermobifida fusca (strain YX).